The chain runs to 326 residues: Probable cell division protein WhiA (326 aa).

A DNA-binding region (H-T-H motif) is located at residues 275-308 (SLDELGRLADPPMTKDAIAGRIRRLLAMADKRAL).

It belongs to the WhiA family.

Involved in cell division and chromosome segregation. The sequence is that of Probable cell division protein WhiA from Arthrobacter sp. (strain FB24).